The primary structure comprises 990 residues: MTIAESSQKSATRKPDSMEPILRLNNIEKSLQDTRDYRGLQLENGLKVLLISDPNTDVSAAALSVQVGHMSDPTNLPGLAHFCEHMLFLGTEKYPHENGYTTYLSQSGGSSNAATYPLMTKYHFHVAPDKLDGALDRFAQFFIAPLFTPSATEREINAVNSEHEKNLPSDLWRIKQVNRHLAKPDHAYSKFGSGNKTTLSEIPKSKNIDVRDELLKFHKQWYSANIMCLAVIGKESLDELEGMVLEKFSEIENKNVKVPGWPRHPYAEERYGQKVKIVPIKDIRSLTISFTTDDLTQFYKSGPDNYLTHLIGHEGKGSILSELRRLGWCNDLMAGHQNTQNGFGFFDIVVDLTQEGLEHVDDIVKIVFQYLEMLRKEGPKKWIFDECVKLNEMRFRFKEKEQPENLVTHAVSSMQIFPLEEVLIAPYLSNEWRPDLIKGLLDELVPSKSRIVIVSQSFEPDCDLAEPYYKTKYGITRVAKDTVQSWENCELNENLKLALPNSFIPTNFDISDVPADAPKHPTIILDTPILRVWHKQDNQFNKPKACMTFDMSNPIAYLDPLNCNLNHMMVMLLKDQLNEYLYDAELASLKLSVMGKSCGIDFTIRGFSDKQVVLLEKLLDHLFDFSIDEKRFDILKEEYVRSLKNFKAEQPYQHSIYYLALLLTENAWANMELLDAMELVTYDRVLNFAKEFFQRLHTECFIFGNVTKQQATDIAGRVNTRLEATNASKLPILARQMLKKREYKLLAGDSYLFEKENEFHKSSCAQLYLQCGAQTDHTNIMVNLVSQVLSEPCYDCLRTKEQLGYIVFSGVRKVNGANGIRIIVQSAKHPSYVEDRIENFLQTYLQVIEDMPLDEFERHKEALAVKKLEKPKTIFQQFSQFYGEIAMQTYHFEREEAEVAILRKISKADFVDYFKKFIAKDGEERRVLSVHIVSQQTDENATSEAEPVEITNMERHKPISDIVTFKSCKELYPIALPFLDIKAKGARSKL.

Residue histidine 81 coordinates Zn(2+). Catalysis depends on glutamate 84, which acts as the Proton acceptor. Histidine 85 and glutamate 162 together coordinate Zn(2+).

The protein belongs to the peptidase M16 family. Requires Zn(2+) as cofactor.

It carries out the reaction Degradation of insulin, glucagon and other polypeptides. No action on proteins.. Its function is as follows. Can cleave insulin and TGF-alpha. The chain is Insulin-degrading enzyme (Ide) from Drosophila melanogaster (Fruit fly).